Reading from the N-terminus, the 195-residue chain is dCTP deaminase (195 aa).

DCTP contacts are provided by residues 105–110, Asp123, 131–133, Gln152, Tyr166, Lys173, and Gln177; these read RSSLGR and TLE. Glu133 functions as the Proton donor/acceptor in the catalytic mechanism. Residues 159-195 are disordered; the sequence is KTPADRPYGAERGSKYQGQSGPQASKIQGDREFGGDQ. The segment covering 160–172 has biased composition (basic and acidic residues); sequence TPADRPYGAERGS. Over residues 174–184 the composition is skewed to polar residues; it reads YQGQSGPQASK. Residues 186–195 show a composition bias toward basic and acidic residues; it reads QGDREFGGDQ.

Belongs to the dCTP deaminase family. As to quaternary structure, homotrimer.

It carries out the reaction dCTP + H2O + H(+) = dUTP + NH4(+). Its pathway is pyrimidine metabolism; dUMP biosynthesis; dUMP from dCTP (dUTP route): step 1/2. In terms of biological role, catalyzes the deamination of dCTP to dUTP. In Haloarcula marismortui (strain ATCC 43049 / DSM 3752 / JCM 8966 / VKM B-1809) (Halobacterium marismortui), this protein is dCTP deaminase.